Consider the following 506-residue polypeptide: Acetaldehyde dehydrogenase 2 (506 aa).

Residue G240–G245 participates in NAD(+) binding. Residues E262 and C301 contribute to the active site.

The protein belongs to the aldehyde dehydrogenase family.

The catalysed reaction is an aldehyde + NAD(+) + H2O = a carboxylate + NADH + 2 H(+). It functions in the pathway alcohol metabolism; ethanol degradation; acetate from ethanol: step 2/2. It participates in ketone degradation; acetoin degradation. In terms of biological role, involved in the catabolism of acetoin and ethanol. In Cupriavidus necator (strain ATCC 17699 / DSM 428 / KCTC 22496 / NCIMB 10442 / H16 / Stanier 337) (Ralstonia eutropha), this protein is Acetaldehyde dehydrogenase 2 (acoD).